Here is a 255-residue protein sequence, read N- to C-terminus: Indole-3-glycerol phosphate synthase (255 aa).

This sequence belongs to the TrpC family.

It catalyses the reaction 1-(2-carboxyphenylamino)-1-deoxy-D-ribulose 5-phosphate + H(+) = (1S,2R)-1-C-(indol-3-yl)glycerol 3-phosphate + CO2 + H2O. The protein operates within amino-acid biosynthesis; L-tryptophan biosynthesis; L-tryptophan from chorismate: step 4/5. This Streptococcus thermophilus (strain CNRZ 1066) protein is Indole-3-glycerol phosphate synthase.